Consider the following 163-residue polypeptide: MASIAQAAKSLLLKEFASAFALSMRQFFAPKATLNYPHEKGPVSPRFRGEHALRRYPNGEERCIACKLCEAICPAQAITIEAGPRRNDGTRRTVRYDIDMVKCIYCGFCQEACPVDAIVEGPNFEFATETREELYYDKDKLLANGDRWEREIARNIAMDAPYR.

4Fe-4S ferredoxin-type domains follow at residues 53-83 (LRRY…IEAG) and 94-123 (VRYD…EGPN). [4Fe-4S] cluster is bound by residues Cys-63, Cys-66, Cys-69, Cys-73, Cys-103, Cys-106, Cys-109, and Cys-113.

Belongs to the complex I 23 kDa subunit family. In terms of assembly, NDH-1 is composed of 14 different subunits. Subunits NuoA, H, J, K, L, M, N constitute the membrane sector of the complex. [4Fe-4S] cluster serves as cofactor.

It is found in the cell inner membrane. The enzyme catalyses a quinone + NADH + 5 H(+)(in) = a quinol + NAD(+) + 4 H(+)(out). In terms of biological role, NDH-1 shuttles electrons from NADH, via FMN and iron-sulfur (Fe-S) centers, to quinones in the respiratory chain. The immediate electron acceptor for the enzyme in this species is believed to be ubiquinone. Couples the redox reaction to proton translocation (for every two electrons transferred, four hydrogen ions are translocated across the cytoplasmic membrane), and thus conserves the redox energy in a proton gradient. In Brucella abortus (strain S19), this protein is NADH-quinone oxidoreductase subunit I.